Consider the following 490-residue polypeptide: Tektin-3 (490 aa).

Threonine 7 and threonine 9 each carry an O-linked (GalNAc...) threonine glycan. Residues asparagine 41, asparagine 86, asparagine 111, and asparagine 276 are each glycosylated (N-linked (GlcNAc...) asparagine). Residues arginine 419–glutamate 456 adopt a coiled-coil conformation.

Belongs to the tektin family. In terms of assembly, microtubule inner protein component of sperm flagellar doublet microtubules. Interacts with TEKT1, TEKT2, TEKT4 and TEKT5. Interacts with CCDC38. Post-translationally, N- and O-glycosylated. In terms of processing, may be proteolytically processed during the epididymal transit of spermatozoa. Ubiquitinated, leading to its degradation. Deubiquitinated by USP16, promoting its stability. Expressed in epididymal sperm (at protein level).

The protein resides in the cytoplasm. Its subcellular location is the cytoskeleton. It is found in the cilium axoneme. It localises to the flagellum axoneme. The protein localises to the cytoplasmic vesicle. The protein resides in the secretory vesicle. Its subcellular location is the acrosome outer membrane. Functionally, microtubule inner protein (MIP) part of the dynein-decorated doublet microtubules (DMTs) in cilia and flagellar axoneme. Forms filamentous polymers in the walls of ciliary and flagellar microtubules. Required for normal sperm mobility. The protein is Tektin-3 (Tekt3) of Rattus norvegicus (Rat).